A 399-amino-acid chain; its full sequence is Succinate--CoA ligase [ADP-forming] subunit beta (399 aa).

Residues Lys-9–Glu-254 form the ATP-grasp domain. Residues Lys-46, Gly-53 to Gly-55, Glu-109, Ser-112, and Glu-117 each bind ATP. Mg(2+) is bound by residues Asn-209 and Asp-223. Residues Asn-274 and Gly-331 to Met-333 contribute to the substrate site.

It belongs to the succinate/malate CoA ligase beta subunit family. In terms of assembly, heterotetramer of two alpha and two beta subunits. Mg(2+) is required as a cofactor.

It carries out the reaction succinate + ATP + CoA = succinyl-CoA + ADP + phosphate. The catalysed reaction is GTP + succinate + CoA = succinyl-CoA + GDP + phosphate. It functions in the pathway carbohydrate metabolism; tricarboxylic acid cycle; succinate from succinyl-CoA (ligase route): step 1/1. Functionally, succinyl-CoA synthetase functions in the citric acid cycle (TCA), coupling the hydrolysis of succinyl-CoA to the synthesis of either ATP or GTP and thus represents the only step of substrate-level phosphorylation in the TCA. The beta subunit provides nucleotide specificity of the enzyme and binds the substrate succinate, while the binding sites for coenzyme A and phosphate are found in the alpha subunit. This is Succinate--CoA ligase [ADP-forming] subunit beta from Rhodopseudomonas palustris (strain BisA53).